Reading from the N-terminus, the 118-residue chain is UPF0134 protein MPN_287 (118 aa).

This sequence belongs to the UPF0134 family.

In Mycoplasma pneumoniae (strain ATCC 29342 / M129 / Subtype 1) (Mycoplasmoides pneumoniae), this protein is UPF0134 protein MPN_287.